Consider the following 129-residue polypeptide: Large ribosomal subunit protein bL20 (129 aa).

The protein belongs to the bacterial ribosomal protein bL20 family.

Functionally, binds directly to 23S ribosomal RNA and is necessary for the in vitro assembly process of the 50S ribosomal subunit. It is not involved in the protein synthesizing functions of that subunit. The chain is Large ribosomal subunit protein bL20 from Mycolicibacterium smegmatis (strain ATCC 700084 / mc(2)155) (Mycobacterium smegmatis).